We begin with the raw amino-acid sequence, 254 residues long: Segregation and condensation protein A (254 aa).

The protein belongs to the ScpA family. In terms of assembly, component of a cohesin-like complex composed of ScpA, ScpB and the Smc homodimer, in which ScpA and ScpB bind to the head domain of Smc. The presence of the three proteins is required for the association of the complex with DNA.

Its subcellular location is the cytoplasm. Its function is as follows. Participates in chromosomal partition during cell division. May act via the formation of a condensin-like complex containing Smc and ScpB that pull DNA away from mid-cell into both cell halves. The protein is Segregation and condensation protein A of Clostridium tetani (strain Massachusetts / E88).